A 197-amino-acid chain; its full sequence is Phosphoheptose isomerase (197 aa).

In terms of domain architecture, SIS spans 37–197 (MLQCLMNDGK…CIDSVLLEGM (161 aa)). 52–54 (NGG) is a binding site for substrate. Zn(2+) is bound by residues histidine 61 and glutamate 65. Substrate is bound by residues glutamate 65, 94–95 (ND), 120–122 (STS), serine 125, and glutamine 175. Zn(2+) contacts are provided by glutamine 175 and histidine 183.

Belongs to the SIS family. GmhA subfamily. Homotetramer. Zn(2+) is required as a cofactor.

It is found in the cytoplasm. The enzyme catalyses 2 D-sedoheptulose 7-phosphate = D-glycero-alpha-D-manno-heptose 7-phosphate + D-glycero-beta-D-manno-heptose 7-phosphate. It participates in carbohydrate biosynthesis; D-glycero-D-manno-heptose 7-phosphate biosynthesis; D-glycero-alpha-D-manno-heptose 7-phosphate and D-glycero-beta-D-manno-heptose 7-phosphate from sedoheptulose 7-phosphate: step 1/1. Catalyzes the isomerization of sedoheptulose 7-phosphate in D-glycero-D-manno-heptose 7-phosphate. In Neisseria gonorrhoeae (strain ATCC 700825 / FA 1090), this protein is Phosphoheptose isomerase.